A 215-amino-acid chain; its full sequence is Redox-sensing transcriptional repressor Rex (215 aa).

A DNA-binding region (H-T-H motif) is located at residues 18–57; it reads LYHRYLKYLDESGKERVSSAELSEAVKVDSATIRRDFSYF. 92–97 lines the NAD(+) pocket; sequence GVGNLG.

The protein belongs to the transcriptional regulatory Rex family. As to quaternary structure, homodimer.

The protein localises to the cytoplasm. In terms of biological role, modulates transcription in response to changes in cellular NADH/NAD(+) redox state. The polypeptide is Redox-sensing transcriptional repressor Rex (Listeria innocua serovar 6a (strain ATCC BAA-680 / CLIP 11262)).